The chain runs to 188 residues: Adenine phosphoribosyltransferase (188 aa).

The protein belongs to the purine/pyrimidine phosphoribosyltransferase family. Homodimer.

The protein resides in the cytoplasm. It catalyses the reaction AMP + diphosphate = 5-phospho-alpha-D-ribose 1-diphosphate + adenine. The protein operates within purine metabolism; AMP biosynthesis via salvage pathway; AMP from adenine: step 1/1. Its function is as follows. Catalyzes a salvage reaction resulting in the formation of AMP, that is energically less costly than de novo synthesis. The polypeptide is Adenine phosphoribosyltransferase (Burkholderia orbicola (strain MC0-3)).